Here is a 338-residue protein sequence, read N- to C-terminus: ABC transporter I family member 6, chloroplastic (338 aa).

The transit peptide at 1 to 66 directs the protein to the chloroplast; it reads MAGVNLQLRH…RTTRRSVIVS (66 aa). The 247-residue stretch at 92–338 folds into the ABC transporter domain; sequence LEVRDLRAVI…EKEGYKAISG (247 aa). Residue 126 to 133 participates in ATP binding; sequence GKNGSGKS.

This sequence belongs to the ABC transporter superfamily. ABCI family. In terms of assembly, interacts with NAP6. In terms of tissue distribution, present in all organs, with higher levels in aerial parts.

The protein resides in the plastid. It is found in the chloroplast. Essential protein. Required during embryo development, especially at early stages. Involved in chloroplast differentiation. The chain is ABC transporter I family member 6, chloroplastic (ABCI6) from Arabidopsis thaliana (Mouse-ear cress).